A 328-amino-acid chain; its full sequence is Malate dehydrogenase (328 aa).

12–18 (GAAGQIG) serves as a coordination point for NAD(+). Residues R95 and R101 each contribute to the substrate site. NAD(+) contacts are provided by residues N108, Q115, and 132–134 (VGN). Positions 134 and 165 each coordinate substrate. H190 acts as the Proton acceptor in catalysis.

It belongs to the LDH/MDH superfamily. MDH type 2 family.

It catalyses the reaction (S)-malate + NAD(+) = oxaloacetate + NADH + H(+). Its function is as follows. Catalyzes the reversible oxidation of malate to oxaloacetate. This Delftia acidovorans (strain DSM 14801 / SPH-1) protein is Malate dehydrogenase.